The sequence spans 159 residues: Putative pre-16S rRNA nuclease (159 aa).

This sequence belongs to the YqgF nuclease family.

The protein resides in the cytoplasm. Its function is as follows. Could be a nuclease involved in processing of the 5'-end of pre-16S rRNA. The polypeptide is Putative pre-16S rRNA nuclease (Thermobifida fusca (strain YX)).